The chain runs to 329 residues: 4-hydroxythreonine-4-phosphate dehydrogenase (329 aa).

Substrate is bound by residues His-136 and Thr-137. A divalent metal cation contacts are provided by His-166, His-211, and His-266. The substrate site is built by Lys-274, Asn-283, and Arg-292.

The protein belongs to the PdxA family. Homodimer. Requires Zn(2+) as cofactor. Mg(2+) serves as cofactor. Co(2+) is required as a cofactor.

It is found in the cytoplasm. The enzyme catalyses 4-(phosphooxy)-L-threonine + NAD(+) = 3-amino-2-oxopropyl phosphate + CO2 + NADH. The protein operates within cofactor biosynthesis; pyridoxine 5'-phosphate biosynthesis; pyridoxine 5'-phosphate from D-erythrose 4-phosphate: step 4/5. Its function is as follows. Catalyzes the NAD(P)-dependent oxidation of 4-(phosphooxy)-L-threonine (HTP) into 2-amino-3-oxo-4-(phosphooxy)butyric acid which spontaneously decarboxylates to form 3-amino-2-oxopropyl phosphate (AHAP). The chain is 4-hydroxythreonine-4-phosphate dehydrogenase from Pseudomonas syringae pv. tomato (strain ATCC BAA-871 / DC3000).